The chain runs to 94 residues: MLNVNEYFAGKVKSIGFEGDSIGRASVGVMDAGEYTFGTGQPEEMTVITGALKVLLPGAPDWQVFTPGETFFVPGKSEFNLQVVEPTSYLCKYL.

It belongs to the nucleoside phosphorylase PpnP family.

It carries out the reaction a purine D-ribonucleoside + phosphate = a purine nucleobase + alpha-D-ribose 1-phosphate. It catalyses the reaction adenosine + phosphate = alpha-D-ribose 1-phosphate + adenine. The enzyme catalyses cytidine + phosphate = cytosine + alpha-D-ribose 1-phosphate. The catalysed reaction is guanosine + phosphate = alpha-D-ribose 1-phosphate + guanine. It carries out the reaction inosine + phosphate = alpha-D-ribose 1-phosphate + hypoxanthine. It catalyses the reaction thymidine + phosphate = 2-deoxy-alpha-D-ribose 1-phosphate + thymine. The enzyme catalyses uridine + phosphate = alpha-D-ribose 1-phosphate + uracil. The catalysed reaction is xanthosine + phosphate = alpha-D-ribose 1-phosphate + xanthine. Catalyzes the phosphorolysis of diverse nucleosides, yielding D-ribose 1-phosphate and the respective free bases. Can use uridine, adenosine, guanosine, cytidine, thymidine, inosine and xanthosine as substrates. Also catalyzes the reverse reactions. The polypeptide is Pyrimidine/purine nucleoside phosphorylase (Pectobacterium atrosepticum (strain SCRI 1043 / ATCC BAA-672) (Erwinia carotovora subsp. atroseptica)).